A 341-amino-acid polypeptide reads, in one-letter code: Putative MAGE domain-containing protein MAGEA13P (341 aa).

2 disordered regions span residues 1-21 (MPHSQKSRHCELEQGLQAPKE) and 78-101 (KATPWNQSDESSRSQEKKDPGASQ). Over residues 87 to 97 (ESSRSQEKKDP) the composition is skewed to basic and acidic residues. The 200-residue stretch at 105–304 (LEKKVDELVK…SSFPLLYEEA (200 aa)) folds into the MAGE domain.

The protein is Putative MAGE domain-containing protein MAGEA13P (MAGEA13P) of Homo sapiens (Human).